A 286-amino-acid polypeptide reads, in one-letter code: Hydroxysteroid 11-beta-dehydrogenase 1-like protein (286 aa).

The signal sequence occupies residues methionine 1 to alanine 17. NADP(+) contacts are provided by residues glycine 39–arginine 65, aspartate 90–methionine 91, and asparagine 117–isoleucine 119. A substrate-binding site is contributed by serine 168. Tyrosine 181 acts as the Proton acceptor in catalysis. NADP(+) is bound by residues tyrosine 181–lysine 185 and glycine 214–serine 220.

Belongs to the short-chain dehydrogenases/reductases (SDR) family.

Its subcellular location is the secreted. The enzyme catalyses cortisone + NADPH + H(+) = cortisol + NADP(+). Its function is as follows. Unidirectional NADP(+)-dependent cortisol dehydrogenase (in vitro). This chain is Hydroxysteroid 11-beta-dehydrogenase 1-like protein (hsd11b1l), found in Xenopus tropicalis (Western clawed frog).